Consider the following 704-residue polypeptide: Elongation factor G (704 aa).

The region spanning 10 to 290 is the tr-type G domain; the sequence is NKVRNIGIMA…AVIDYLPSPL (281 aa). Residues 19–26, 83–87, and 137–140 contribute to the GTP site; these read AHIDAGKT, DTPGH, and NKMD.

Belongs to the TRAFAC class translation factor GTPase superfamily. Classic translation factor GTPase family. EF-G/EF-2 subfamily.

It localises to the cytoplasm. Functionally, catalyzes the GTP-dependent ribosomal translocation step during translation elongation. During this step, the ribosome changes from the pre-translocational (PRE) to the post-translocational (POST) state as the newly formed A-site-bound peptidyl-tRNA and P-site-bound deacylated tRNA move to the P and E sites, respectively. Catalyzes the coordinated movement of the two tRNA molecules, the mRNA and conformational changes in the ribosome. The sequence is that of Elongation factor G from Clavibacter sepedonicus (Clavibacter michiganensis subsp. sepedonicus).